Reading from the N-terminus, the 418-residue chain is Nucleoside permease NupC (418 aa).

Transmembrane regions (helical) follow at residues 2 to 22 (IFSSLFSVVGMAVLFLIAWVF), 34 to 54 (IVSAFVIQVALGALALYVPLG), 93 to 113 (IGGFVFAINVLAIIIFFASLI), 174 to 194 (IFAVMCVGMASVAGPVLAGYA), 198 to 218 (IPLPYLIAASFMSAPGGLLFA), 264 to 284 (LLAFVGMLALINGLLGVVGGF), 292 to 314 (LGLILGTLLKPLAFMLGIPWSQA), 354 to 374 (AIITFALCGFANLSSVAMLIG), and 395 to 415 (VLVGTLSNFMSATIAGLFIGL).

The protein belongs to the concentrative nucleoside transporter (CNT) (TC 2.A.41) family.

The protein resides in the cell inner membrane. Its function is as follows. Involved in purine nucleosides uptake. Could also be involved in uptake of nucleobases. The chain is Nucleoside permease NupC from Helicobacter pylori (strain ATCC 700392 / 26695) (Campylobacter pylori).